Consider the following 567-residue polypeptide: Potassium-transporting ATPase potassium-binding subunit (567 aa).

Transmembrane regions (helical) follow at residues 5 to 25 (GWIQILVFCGIIILLVKPLGG), 64 to 84 (TTYAASLLLFNLAGFLLLYML), 136 to 156 (GLTVQNFVSAATGVAIAIALI), 179 to 199 (LYVLLPLCIILTLAFVSLGVP), 254 to 274 (ISNMIQMVAIFAIGASLTNVF), 285 to 305 (WAIFAAMGILFVAGVAICYWA), 332 to 352 (IAMSALFAVVTTAASCGAVIA), 359 to 376 (ALGGMIPMINMMLGEIII), 421 to 441 (MLAVLCLPLSILGFTAIASVI), 486 to 506 (ITIGLAMLMGRFLVILPAMAI), and 529 to 549 (LFVGLLIGVILVVGGLIFFPA).

It belongs to the KdpA family. As to quaternary structure, the system is composed of three essential subunits: KdpA, KdpB and KdpC.

The protein localises to the cell inner membrane. In terms of biological role, part of the high-affinity ATP-driven potassium transport (or Kdp) system, which catalyzes the hydrolysis of ATP coupled with the electrogenic transport of potassium into the cytoplasm. This subunit binds the periplasmic potassium ions and delivers the ions to the membrane domain of KdpB through an intramembrane tunnel. This chain is Potassium-transporting ATPase potassium-binding subunit, found in Brucella anthropi (strain ATCC 49188 / DSM 6882 / CCUG 24695 / JCM 21032 / LMG 3331 / NBRC 15819 / NCTC 12168 / Alc 37) (Ochrobactrum anthropi).